The sequence spans 278 residues: Digeranylgeranylglyceryl phosphate synthase (278 aa).

8 consecutive transmembrane segments (helical) span residues V15–V35, P36–I56, I89–I109, L133–G153, T159–I179, W203–F223, F225–L245, and A258–I278.

This sequence belongs to the UbiA prenyltransferase family. DGGGP synthase subfamily. Requires Mg(2+) as cofactor.

The protein localises to the cell membrane. It catalyses the reaction sn-3-O-(geranylgeranyl)glycerol 1-phosphate + (2E,6E,10E)-geranylgeranyl diphosphate = 2,3-bis-O-(geranylgeranyl)-sn-glycerol 1-phosphate + diphosphate. It functions in the pathway membrane lipid metabolism; glycerophospholipid metabolism. Its function is as follows. Prenyltransferase that catalyzes the transfer of the geranylgeranyl moiety of geranylgeranyl diphosphate (GGPP) to the C2 hydroxyl of (S)-3-O-geranylgeranylglyceryl phosphate (GGGP). This reaction is the second ether-bond-formation step in the biosynthesis of archaeal membrane lipids. This Sulfurisphaera tokodaii (strain DSM 16993 / JCM 10545 / NBRC 100140 / 7) (Sulfolobus tokodaii) protein is Digeranylgeranylglyceryl phosphate synthase.